Consider the following 441-residue polypeptide: Synaptotagmin-1 (441 aa).

Topologically, residues 1-69 are vesicular; it reads MVKLDFSSQD…DVVKEKVMQQ (69 aa). The chain crosses the membrane as a helical span at residues 70–96; that stretch reads TGMPEWAFVFLGFVFILLVLACAFCLI. Topologically, residues 97–441 are cytoplasmic; that stretch reads RKLFGKKRHG…EEGDKKDDKK (345 aa). C2 domains follow at residues 159–278 and 292–425; these read KLGR…EEWK and SLGD…AQWH. Residues Asp-190, Asp-196, Asp-248, Phe-249, Asp-250, Ser-253, Lys-254, Asp-256, Asp-323, Asp-329, Asp-383, Asp-385, and Asp-391 each coordinate Ca(2+).

Belongs to the synaptotagmin family. Ca(2+) is required as a cofactor. As to expression, localized to regions known to be rich in synapses and appears to be associated with synaptic vesicles. Also found in some non-neuronal secretory structures.

The protein resides in the cytoplasmic vesicle. The protein localises to the secretory vesicle. It localises to the synaptic vesicle membrane. It is found in the synapse. May have a regulatory role in the membrane interactions during trafficking of synaptic vesicles at the active zone of the synapse. It binds acidic phospholipids with a specificity that requires the presence of both an acidic head group and a diacyl backbone. Involved in necrotic cell death. The polypeptide is Synaptotagmin-1 (snt-1) (Caenorhabditis elegans).